Consider the following 306-residue polypeptide: tRNA (guanine-N(1)-)-methyltransferase (306 aa).

S-adenosyl-L-methionine is bound by residues G157 and 182–187; that span reads IGDYVL.

This sequence belongs to the RNA methyltransferase TrmD family. In terms of assembly, homodimer.

The protein localises to the cytoplasm. The enzyme catalyses guanosine(37) in tRNA + S-adenosyl-L-methionine = N(1)-methylguanosine(37) in tRNA + S-adenosyl-L-homocysteine + H(+). Specifically methylates guanosine-37 in various tRNAs. The polypeptide is tRNA (guanine-N(1)-)-methyltransferase (Bifidobacterium adolescentis (strain ATCC 15703 / DSM 20083 / NCTC 11814 / E194a)).